The chain runs to 154 residues: Myoglobin (154 aa).

A Globin domain is found at 2–148; it reads GLSDGEWELV…FRNDIAAKYK (147 aa). Ser4 is subject to Phosphoserine. Thr68 carries the post-translational modification Phosphothreonine. His94 contributes to the heme b binding site.

Belongs to the globin family. As to quaternary structure, monomeric.

It localises to the cytoplasm. Its subcellular location is the sarcoplasm. The enzyme catalyses Fe(III)-heme b-[protein] + nitric oxide + H2O = Fe(II)-heme b-[protein] + nitrite + 2 H(+). The catalysed reaction is H2O2 + AH2 = A + 2 H2O. Its function is as follows. Monomeric heme protein which primary function is to store oxygen and facilitate its diffusion within muscle tissues. Reversibly binds oxygen through a pentacoordinated heme iron and enables its timely and efficient release as needed during periods of heightened demand. Depending on the oxidative conditions of tissues and cells, and in addition to its ability to bind oxygen, it also has a nitrite reductase activity whereby it regulates the production of bioactive nitric oxide. Under stress conditions, like hypoxia and anoxia, it also protects cells against reactive oxygen species thanks to its pseudoperoxidase activity. The chain is Myoglobin (MB) from Loxodonta africana (African elephant).